Consider the following 154-residue polypeptide: MLYYMIALLIIAADQLTKWLVVKNMELGQSIPIIDQVFYITSHRNTGAAWGILAGQMWFFYLITTAVIIGIVYYIQRYTKGQRLLGVALGLMLGGAIGNFIDRAVRQEVVDFIHVIIVNYNYPIFNIADSSLCVGVMLLFIQMLLDSGKKKKEQ.

2 helical membrane passes run 52-72 and 85-105; these read ILAG…IGIV and LGVA…DRAV. Catalysis depends on residues Asp111 and Asp129. Residues 124 to 144 traverse the membrane as a helical segment; sequence IFNIADSSLCVGVMLLFIQML.

Belongs to the peptidase A8 family.

Its subcellular location is the cell membrane. It carries out the reaction Release of signal peptides from bacterial membrane prolipoproteins. Hydrolyzes -Xaa-Yaa-Zaa-|-(S,diacylglyceryl)Cys-, in which Xaa is hydrophobic (preferably Leu), and Yaa (Ala or Ser) and Zaa (Gly or Ala) have small, neutral side chains.. It functions in the pathway protein modification; lipoprotein biosynthesis (signal peptide cleavage). Its function is as follows. This protein specifically catalyzes the removal of signal peptides from prolipoproteins. This chain is Lipoprotein signal peptidase, found in Bacillus subtilis (strain 168).